Here is a 175-residue protein sequence, read N- to C-terminus: SKP1-like protein 20 (175 aa).

The interaction with the F-box domain of F-box proteins stretch occupies residues 117–175 (ILAANYLNIKGLLDLTCQTVADMIKGKTPEEIRKTFNIKNDFTPEEEEEVRRENQWAFE).

The protein belongs to the SKP1 family. As to quaternary structure, part of a SCF (SKP1-CUL1-F-box protein) E3 ubiquitin-protein ligase complex. Interacts with rice black streaked dwarf virus RBSDV protein P7-2. Is able to form the SCF complex together with CUL1 and the viral P7-2 protein. Interacts with D3.

It is found in the nucleus. The protein operates within protein modification; protein ubiquitination. In terms of biological role, involved in ubiquitination and subsequent proteasomal degradation of target proteins. Together with CUL1, a RING-box and a F-box protein, it forms a SCF E3 ubiquitin ligase complex. The functional specificity of this complex depends on the type of F-box protein. In the SCF complex, it serves as an adapter that links the F-box protein to CUL1. This chain is SKP1-like protein 20, found in Oryza sativa subsp. japonica (Rice).